The following is a 137-amino-acid chain: Large ribosomal subunit protein uL16 (137 aa).

The protein belongs to the universal ribosomal protein uL16 family. Part of the 50S ribosomal subunit.

Its function is as follows. Binds 23S rRNA and is also seen to make contacts with the A and possibly P site tRNAs. This Psychrobacter arcticus (strain DSM 17307 / VKM B-2377 / 273-4) protein is Large ribosomal subunit protein uL16.